A 226-amino-acid polypeptide reads, in one-letter code: 7-cyano-7-deazaguanine synthase (226 aa).

10–20 (LSGGLDSATAA) is a binding site for ATP. Zn(2+) contacts are provided by C191, C199, C202, and C205.

It belongs to the QueC family. Zn(2+) is required as a cofactor.

It carries out the reaction 7-carboxy-7-deazaguanine + NH4(+) + ATP = 7-cyano-7-deazaguanine + ADP + phosphate + H2O + H(+). The protein operates within purine metabolism; 7-cyano-7-deazaguanine biosynthesis. Functionally, catalyzes the ATP-dependent conversion of 7-carboxy-7-deazaguanine (CDG) to 7-cyano-7-deazaguanine (preQ(0)). In Synechococcus sp. (strain CC9311), this protein is 7-cyano-7-deazaguanine synthase.